The primary structure comprises 74 residues: Small ribosomal subunit protein uS15 (74 aa).

This sequence belongs to the universal ribosomal protein uS15 family. In terms of assembly, part of the 30S ribosomal subunit. Forms a bridge to the 50S subunit in the 70S ribosome, contacting the 23S rRNA.

In terms of biological role, one of the primary rRNA binding proteins, it binds directly to 16S rRNA where it helps nucleate assembly of the platform of the 30S subunit by binding and bridging several RNA helices of the 16S rRNA. Forms an intersubunit bridge (bridge B4) with the 23S rRNA of the 50S subunit in the ribosome. This is Small ribosomal subunit protein uS15 from Onion yellows phytoplasma (strain OY-M).